Reading from the N-terminus, the 553-residue chain is Transcription factor GAMYB (553 aa).

A compositionally biased stretch (basic and acidic residues) spans 1 to 17 (MYRVKSESDCDMIHQEQ). The disordered stretch occupies residues 1 to 45 (MYRVKSESDCDMIHQEQMDSPVADDGSSGGSPHRGGGPPLKKGPW). Residues 27–38 (SSGGSPHRGGGP) show a composition bias toward gly residues. HTH myb-type domains are found at residues 37–89 (GPPL…ANHL) and 90–144 (RPNL…KRCQ). 2 consecutive DNA-binding regions (H-T-H motif) follow at residues 65–89 (WNAV…ANHL) and 117–140 (WARM…NTRI). The interval 464-489 (PAQSTSMGSGEQVMGPKYEPGDTSPH) is disordered.

Interacts with MYBS1. As to expression, expressed in aleurone cells, inflorescence shoot apical region, stamen primordia, and tapetum cells of the anther. Expressed at low level in roots and vegetative shoots.

The protein resides in the nucleus. Its function is as follows. Transcriptional activator of gibberellin-dependent alpha-amylase expression in aleurone cells. Involved in pollen and floral organs development. May bind to the 5'-TAACAAA-3' box of alpha-amylase promoter. Required for anther development. Functions in parallel with UDT1 to regulate early anther development. Functions upstream of the transcription factor TDR and may positively regulate its transcription. Required for pollen development. Probably required for controlling tapetal cell size and promoting tapetal programmed cell death (PCD) during anther development. Required for exine and Ubisch body formation in anthers. Interacts with the DNA specific motifs of giberrellin-up-regulated genes of anthers and regulates their expression. Positively regulates the expression of the laurate hydroxylase CYP703A3, known to be essential for the development of pollen exine and anther epicuticular layer. Functions with MYBS1 to integrate diverse nutrient starvation and gibberellin (GA) signaling pathways during germination of grains. Sugar, nitrogen and phosphate starvation signals converge and interconnect with GA to promote the co-nuclear import of GAMYB and MYBS1, resulting in the expression of a large set of GA-inducible hydrolases, transporters and regulators that are essential for mobilization of nutrient reserves in the endosperm to support seedling growth. The polypeptide is Transcription factor GAMYB (Oryza sativa subsp. japonica (Rice)).